The following is a 450-amino-acid chain: MSEPAPAKRLYIKTYGCQMNVYDSERMADVLAPLGYGVTDDPAAADLVVLNTCHIREKATEKVYSELGQIKRLKEARRAEGQGMTIAVAGCVAQAEGEEIMRRQPAVDLVVGPQAYHQLPELIARAHRARGERLAADFAPDEKFDALATERRPTGVTAFLTVQEGCDKFCTFCVVPYTRGGEWSRPAEAIEAEARALAAKGVREVTLLGQNVNAYDGANGQGAGLAGLVRRLAKIPGLDRIRYTTSHPRDMDDDLIAAHAEVPELMPYLHLPVQAGSDRILRAMNRAHTAESYLRVIEKVRVARPDIAISGDFIVGFPGEREADFEATLQLVREVGYASCFSFKYSRRPGTPAAALPGQVAEEVKEERLQRLQALLEQQQLAFNAAQAGRVLPVLFEKTGRHPGQLIGRSPYLQAVHAHAPDRLIGQIVPVKVESGGRNSLAGVLELETA.

The 121-residue stretch at 8-128 (KRLYIKTYGC…LPELIARAHR (121 aa)) folds into the MTTase N-terminal domain. [4Fe-4S] cluster contacts are provided by C17, C53, C91, C166, C170, and C173. In terms of domain architecture, Radical SAM core spans 152-382 (RPTGVTAFLT…QALLEQQQLA (231 aa)). Positions 385-447 (AAQAGRVLPV…RNSLAGVLEL (63 aa)) constitute a TRAM domain.

The protein belongs to the methylthiotransferase family. MiaB subfamily. As to quaternary structure, monomer. Requires [4Fe-4S] cluster as cofactor.

It is found in the cytoplasm. It catalyses the reaction N(6)-dimethylallyladenosine(37) in tRNA + (sulfur carrier)-SH + AH2 + 2 S-adenosyl-L-methionine = 2-methylsulfanyl-N(6)-dimethylallyladenosine(37) in tRNA + (sulfur carrier)-H + 5'-deoxyadenosine + L-methionine + A + S-adenosyl-L-homocysteine + 2 H(+). In terms of biological role, catalyzes the methylthiolation of N6-(dimethylallyl)adenosine (i(6)A), leading to the formation of 2-methylthio-N6-(dimethylallyl)adenosine (ms(2)i(6)A) at position 37 in tRNAs that read codons beginning with uridine. This Phenylobacterium zucineum (strain HLK1) protein is tRNA-2-methylthio-N(6)-dimethylallyladenosine synthase.